A 631-amino-acid chain; its full sequence is 1-deoxy-D-xylulose-5-phosphate synthase (631 aa).

Thiamine diphosphate-binding positions include His-87 and 128–130 (GHS). Asp-159 is a Mg(2+) binding site. Residues 160–161 (GA), Asn-188, Phe-295, and Glu-377 each bind thiamine diphosphate. Asn-188 contributes to the Mg(2+) binding site.

The protein belongs to the transketolase family. DXPS subfamily. As to quaternary structure, homodimer. It depends on Mg(2+) as a cofactor. Requires thiamine diphosphate as cofactor.

It carries out the reaction D-glyceraldehyde 3-phosphate + pyruvate + H(+) = 1-deoxy-D-xylulose 5-phosphate + CO2. Its pathway is metabolic intermediate biosynthesis; 1-deoxy-D-xylulose 5-phosphate biosynthesis; 1-deoxy-D-xylulose 5-phosphate from D-glyceraldehyde 3-phosphate and pyruvate: step 1/1. Functionally, catalyzes the acyloin condensation reaction between C atoms 2 and 3 of pyruvate and glyceraldehyde 3-phosphate to yield 1-deoxy-D-xylulose-5-phosphate (DXP). The polypeptide is 1-deoxy-D-xylulose-5-phosphate synthase (Pseudomonas entomophila (strain L48)).